The primary structure comprises 65 residues: Putative cytochrome c oxidase subunit 5C-4 (65 aa).

Residues 20 to 37 form a helical membrane-spanning segment; the sequence is EIIYGITLGFAVGGLWKM.

Belongs to the cytochrome c oxidase subunit 5C family.

The protein resides in the mitochondrion inner membrane. Its function is as follows. This protein is one of the nuclear-coded polypeptide chains of cytochrome c oxidase, the terminal oxidase in mitochondrial electron transport. This chain is Putative cytochrome c oxidase subunit 5C-4, found in Arabidopsis thaliana (Mouse-ear cress).